Consider the following 150-residue polypeptide: Small ribosomal subunit protein eS19 (150 aa).

This sequence belongs to the eukaryotic ribosomal protein eS19 family. In terms of assembly, part of the 30S ribosomal subunit.

Functionally, may be involved in maturation of the 30S ribosomal subunit. This chain is Small ribosomal subunit protein eS19, found in Thermoplasma volcanium (strain ATCC 51530 / DSM 4299 / JCM 9571 / NBRC 15438 / GSS1).